A 233-amino-acid polypeptide reads, in one-letter code: MVRGRTELKRIENPTSRQVTFSKRRNGLLKKAFELSVLCDAEVALIVFSPRGRLYEFASAPSLQKTIDRYKAYTKDHVNNKTIQQDIQQVKDDTLGLAKKLEALDESRRKILGENLEGCSIEELRGLEMKLEKSLHNIRLKKTELLERQIAKLKEKERTLLKDNENLRGKHRNLEAAALVANHMTTTTAPAAWPRDVPMTSSTAGAADAMDVETDLYIGLPGTERSSNRSETG.

Residues 1-61 form the MADS-box domain; sequence MVRGRTELKR…GRLYEFASAP (61 aa). The 91-residue stretch at 87-177 folds into the K-box domain; it reads IQQVKDDTLG…RGKHRNLEAA (91 aa).

The protein localises to the nucleus. Functionally, probable transcription factor. This chain is MADS-box transcription factor 56 (MADS56), found in Oryza sativa subsp. indica (Rice).